Here is a 101-residue protein sequence, read N- to C-terminus: Large ribosomal subunit protein uL23 (101 aa).

Belongs to the universal ribosomal protein uL23 family. Part of the 50S ribosomal subunit. Contacts protein L29, and trigger factor when it is bound to the ribosome.

One of the early assembly proteins it binds 23S rRNA. One of the proteins that surrounds the polypeptide exit tunnel on the outside of the ribosome. Forms the main docking site for trigger factor binding to the ribosome. The sequence is that of Large ribosomal subunit protein uL23 from Corynebacterium glutamicum (strain R).